The primary structure comprises 731 residues: Fatty acid oxidation complex subunit alpha (731 aa).

The interval 15–204 (TEKTSAFSLT…RQGLVDEAVP (190 aa)) is enoyl-CoA hydratase. The interval 320–729 (KPIHRVGILG…FYPPADKDNS (410 aa)) is 3-hydroxyacyl-CoA dehydrogenase.

In the N-terminal section; belongs to the enoyl-CoA hydratase/isomerase family. The protein in the central section; belongs to the 3-hydroxyacyl-CoA dehydrogenase family. As to quaternary structure, heterotetramer of two alpha chains (FadJ) and two beta chains (FadI).

The protein resides in the cytoplasm. The enzyme catalyses a (3S)-3-hydroxyacyl-CoA = a (2E)-enoyl-CoA + H2O. It catalyses the reaction a 4-saturated-(3S)-3-hydroxyacyl-CoA = a (3E)-enoyl-CoA + H2O. The catalysed reaction is a (3S)-3-hydroxyacyl-CoA + NAD(+) = a 3-oxoacyl-CoA + NADH + H(+). It carries out the reaction (3S)-3-hydroxybutanoyl-CoA = (3R)-3-hydroxybutanoyl-CoA. The protein operates within lipid metabolism; fatty acid beta-oxidation. Functionally, catalyzes the formation of a hydroxyacyl-CoA by addition of water on enoyl-CoA. Also exhibits 3-hydroxyacyl-CoA epimerase and 3-hydroxyacyl-CoA dehydrogenase activities. The protein is Fatty acid oxidation complex subunit alpha of Pectobacterium atrosepticum (strain SCRI 1043 / ATCC BAA-672) (Erwinia carotovora subsp. atroseptica).